A 119-amino-acid chain; its full sequence is Large ribosomal subunit protein bL20 (119 aa).

It belongs to the bacterial ribosomal protein bL20 family.

Its function is as follows. Binds directly to 23S ribosomal RNA and is necessary for the in vitro assembly process of the 50S ribosomal subunit. It is not involved in the protein synthesizing functions of that subunit. This is Large ribosomal subunit protein bL20 from Buchnera aphidicola subsp. Cinara cedri (strain Cc).